We begin with the raw amino-acid sequence, 401 residues long: Mitochondrial distribution and morphology protein 12 (401 aa).

In terms of domain architecture, SMP-LTD spans 1-401 (MSIDINWDTL…VYPSFWTFLV (401 aa)). Over residues 70 to 88 (YEEDEDYPDNEDDDDDEAG) the composition is skewed to acidic residues. Disordered stretches follow at residues 70 to 95 (YEED…NPRN) and 190 to 247 (SLTL…EKSP). Residues 195-205 (PQSHPDPSSRP) show a composition bias toward low complexity. Basic and acidic residues predominate over residues 209–220 (HQHDDERRRSLA).

Belongs to the MDM12 family. As to quaternary structure, component of the ER-mitochondria encounter structure (ERMES) or MDM complex, composed of MMM1, MDM10, MDM12 and MDM34. An MMM1 homodimer associates with one molecule of MDM12 on each side in a pairwise head-to-tail manner, and the SMP-LTD domains of MMM1 and MDM12 generate a continuous hydrophobic tunnel for phospholipid trafficking.

The protein resides in the mitochondrion outer membrane. The protein localises to the endoplasmic reticulum membrane. In terms of biological role, component of the ERMES/MDM complex, which serves as a molecular tether to connect the endoplasmic reticulum (ER) and mitochondria. Components of this complex are involved in the control of mitochondrial shape and protein biogenesis, and function in nonvesicular lipid trafficking between the ER and mitochondria. MDM12 is required for the interaction of the ER-resident membrane protein MMM1 and the outer mitochondrial membrane-resident beta-barrel protein MDM10. The MDM12-MMM1 subcomplex functions in the major beta-barrel assembly pathway that is responsible for biogenesis of all mitochondrial outer membrane beta-barrel proteins, and acts in a late step after the SAM complex. The MDM10-MDM12-MMM1 subcomplex further acts in the TOM40-specific pathway after the action of the MDM12-MMM1 complex. Essential for establishing and maintaining the structure of mitochondria and maintenance of mtDNA nucleoids. The sequence is that of Mitochondrial distribution and morphology protein 12 from Phaeosphaeria nodorum (strain SN15 / ATCC MYA-4574 / FGSC 10173) (Glume blotch fungus).